We begin with the raw amino-acid sequence, 143 residues long: Deoxyuridine 5'-triphosphate nucleotidohydrolase (143 aa).

Substrate is bound by residues 62–64, N75, 79–81, and K89; these read RSG and TID.

This sequence belongs to the dUTPase family. It depends on Mg(2+) as a cofactor.

The catalysed reaction is dUTP + H2O = dUMP + diphosphate + H(+). Its pathway is pyrimidine metabolism; dUMP biosynthesis; dUMP from dCTP (dUTP route): step 2/2. This enzyme is involved in nucleotide metabolism: it produces dUMP, the immediate precursor of thymidine nucleotides and it decreases the intracellular concentration of dUTP so that uracil cannot be incorporated into DNA. The polypeptide is Deoxyuridine 5'-triphosphate nucleotidohydrolase (Clostridium kluyveri (strain ATCC 8527 / DSM 555 / NBRC 12016 / NCIMB 10680 / K1)).